A 462-amino-acid polypeptide reads, in one-letter code: Bifunctional protein GlmU (462 aa).

The interval 1–235 (MSYINFSAII…TFEIMGVNSK (235 aa)) is pyrophosphorylase. UDP-N-acetyl-alpha-D-glucosamine contacts are provided by residues 11-14 (LAAG), lysine 25, glutamine 80, 85-86 (GT), 107-109 (YGD), glycine 144, glutamate 159, and asparagine 233. Aspartate 109 provides a ligand contact to Mg(2+). Asparagine 233 lines the Mg(2+) pocket. The tract at residues 236–256 (SDFVDLDKQYQQRKVQCLLSS) is linker. The tract at residues 257–462 (GLMIIDPNRF…LNWKRLKNKK (206 aa)) is N-acetyltransferase. UDP-N-acetyl-alpha-D-glucosamine contacts are provided by arginine 339 and lysine 357. The active-site Proton acceptor is the histidine 369. UDP-N-acetyl-alpha-D-glucosamine is bound by residues tyrosine 372 and asparagine 383. Acetyl-CoA-binding positions include alanine 386, 392 to 393 (NY), alanine 429, and arginine 446.

In the N-terminal section; belongs to the N-acetylglucosamine-1-phosphate uridyltransferase family. It in the C-terminal section; belongs to the transferase hexapeptide repeat family. In terms of assembly, homotrimer. Requires Mg(2+) as cofactor.

It localises to the cytoplasm. The enzyme catalyses alpha-D-glucosamine 1-phosphate + acetyl-CoA = N-acetyl-alpha-D-glucosamine 1-phosphate + CoA + H(+). It carries out the reaction N-acetyl-alpha-D-glucosamine 1-phosphate + UTP + H(+) = UDP-N-acetyl-alpha-D-glucosamine + diphosphate. Its pathway is nucleotide-sugar biosynthesis; UDP-N-acetyl-alpha-D-glucosamine biosynthesis; N-acetyl-alpha-D-glucosamine 1-phosphate from alpha-D-glucosamine 6-phosphate (route II): step 2/2. The protein operates within nucleotide-sugar biosynthesis; UDP-N-acetyl-alpha-D-glucosamine biosynthesis; UDP-N-acetyl-alpha-D-glucosamine from N-acetyl-alpha-D-glucosamine 1-phosphate: step 1/1. It participates in bacterial outer membrane biogenesis; LPS lipid A biosynthesis. Catalyzes the last two sequential reactions in the de novo biosynthetic pathway for UDP-N-acetylglucosamine (UDP-GlcNAc). The C-terminal domain catalyzes the transfer of acetyl group from acetyl coenzyme A to glucosamine-1-phosphate (GlcN-1-P) to produce N-acetylglucosamine-1-phosphate (GlcNAc-1-P), which is converted into UDP-GlcNAc by the transfer of uridine 5-monophosphate (from uridine 5-triphosphate), a reaction catalyzed by the N-terminal domain. The chain is Bifunctional protein GlmU from Blochmanniella pennsylvanica (strain BPEN).